A 279-amino-acid polypeptide reads, in one-letter code: Ribose-phosphate pyrophosphokinase (279 aa).

Residues 31–33 (DGE) and 88–89 (RQ) contribute to the ATP site. Mg(2+)-binding residues include H121 and D159. Residue K182 is part of the active site. Residues R184, D208, and 212–216 (STGGT) each bind D-ribose 5-phosphate.

The protein belongs to the ribose-phosphate pyrophosphokinase family. Class III (archaeal) subfamily. Mg(2+) is required as a cofactor.

It localises to the cytoplasm. The enzyme catalyses D-ribose 5-phosphate + ATP = 5-phospho-alpha-D-ribose 1-diphosphate + AMP + H(+). It participates in metabolic intermediate biosynthesis; 5-phospho-alpha-D-ribose 1-diphosphate biosynthesis; 5-phospho-alpha-D-ribose 1-diphosphate from D-ribose 5-phosphate (route I): step 1/1. Its function is as follows. Involved in the biosynthesis of the central metabolite phospho-alpha-D-ribosyl-1-pyrophosphate (PRPP) via the transfer of pyrophosphoryl group from ATP to 1-hydroxyl of ribose-5-phosphate (Rib-5-P). The protein is Ribose-phosphate pyrophosphokinase of Pyrococcus furiosus (strain ATCC 43587 / DSM 3638 / JCM 8422 / Vc1).